A 512-amino-acid chain; its full sequence is 2,3-bisphosphoglycerate-independent phosphoglycerate mutase (512 aa).

Mn(2+) is bound by residues Asp11 and Ser61. The Phosphoserine intermediate role is filled by Ser61. Substrate-binding positions include His122, Arg152 to Asp153, Arg184, Arg190, Arg259 to Arg262, and Lys332. Residues Asp399, His403, Asp440, His441, and His459 each contribute to the Mn(2+) site.

The protein belongs to the BPG-independent phosphoglycerate mutase family. In terms of assembly, monomer. The cofactor is Mn(2+).

It catalyses the reaction (2R)-2-phosphoglycerate = (2R)-3-phosphoglycerate. It participates in carbohydrate degradation; glycolysis; pyruvate from D-glyceraldehyde 3-phosphate: step 3/5. Functionally, catalyzes the interconversion of 2-phosphoglycerate and 3-phosphoglycerate. This is 2,3-bisphosphoglycerate-independent phosphoglycerate mutase from Francisella tularensis subsp. holarctica (strain FTNF002-00 / FTA).